Reading from the N-terminus, the 180-residue chain is Translation initiation factor IF-3 (180 aa).

This sequence belongs to the IF-3 family. Monomer.

The protein localises to the cytoplasm. IF-3 binds to the 30S ribosomal subunit and shifts the equilibrium between 70S ribosomes and their 50S and 30S subunits in favor of the free subunits, thus enhancing the availability of 30S subunits on which protein synthesis initiation begins. The protein is Translation initiation factor IF-3 of Shewanella oneidensis (strain ATCC 700550 / JCM 31522 / CIP 106686 / LMG 19005 / NCIMB 14063 / MR-1).